The primary structure comprises 151 residues: SsrA-binding protein (151 aa).

Belongs to the SmpB family.

The protein localises to the cytoplasm. In terms of biological role, required for rescue of stalled ribosomes mediated by trans-translation. Binds to transfer-messenger RNA (tmRNA), required for stable association of tmRNA with ribosomes. tmRNA and SmpB together mimic tRNA shape, replacing the anticodon stem-loop with SmpB. tmRNA is encoded by the ssrA gene; the 2 termini fold to resemble tRNA(Ala) and it encodes a 'tag peptide', a short internal open reading frame. During trans-translation Ala-aminoacylated tmRNA acts like a tRNA, entering the A-site of stalled ribosomes, displacing the stalled mRNA. The ribosome then switches to translate the ORF on the tmRNA; the nascent peptide is terminated with the 'tag peptide' encoded by the tmRNA and targeted for degradation. The ribosome is freed to recommence translation, which seems to be the essential function of trans-translation. In Campylobacter concisus (strain 13826), this protein is SsrA-binding protein.